Reading from the N-terminus, the 25-residue chain is Xenoposin precursor fragment R2 (25 aa).

In terms of tissue distribution, expressed by the skin glands.

It is found in the secreted. Its function is as follows. Antimicrobial peptide. The polypeptide is Xenoposin precursor fragment R2 (Xenopus ruwenzoriensis (Uganda clawed frog)).